The primary structure comprises 220 residues: Deoxyribose-phosphate aldolase (220 aa).

The Proton donor/acceptor role is filled by Asp-89. Lys-151 acts as the Schiff-base intermediate with acetaldehyde in catalysis. The Proton donor/acceptor role is filled by Lys-180.

Belongs to the DeoC/FbaB aldolase family. DeoC type 1 subfamily. As to quaternary structure, homotetramer, in solution and in the crystal structure.

The protein localises to the cytoplasm. The enzyme catalyses 2-deoxy-D-ribose 5-phosphate = D-glyceraldehyde 3-phosphate + acetaldehyde. The protein operates within carbohydrate degradation; 2-deoxy-D-ribose 1-phosphate degradation; D-glyceraldehyde 3-phosphate and acetaldehyde from 2-deoxy-alpha-D-ribose 1-phosphate: step 2/2. Catalyzes a reversible aldol reaction between acetaldehyde and D-glyceraldehyde 3-phosphate to generate 2-deoxy-D-ribose 5-phosphate. The polypeptide is Deoxyribose-phosphate aldolase (Thermus thermophilus (strain ATCC 27634 / DSM 579 / HB8)).